Here is a 101-residue protein sequence, read N- to C-terminus: Small ribosomal subunit protein uS10 (101 aa).

It belongs to the universal ribosomal protein uS10 family. Part of the 30S ribosomal subunit.

Functionally, involved in the binding of tRNA to the ribosomes. In Methanocaldococcus jannaschii (strain ATCC 43067 / DSM 2661 / JAL-1 / JCM 10045 / NBRC 100440) (Methanococcus jannaschii), this protein is Small ribosomal subunit protein uS10.